The following is a 251-amino-acid chain: Protein DEEPER ROOTING 1 (251 aa).

Positions 46–52 (SLLAIGT) match the IGT motif motif. Residues 64–105 (VENSSDNVQSVQDTVKFTEEEVDKIRKEFETLLAIKDQAEAQ) are a coiled coil.

It belongs to the LAZY family.

Functionally, involved in the control of root growth angle. Involved in cell elongation in the root tip that causes asymmetric root growth and downward bending of the root in response to gravity. The chain is Protein DEEPER ROOTING 1 from Oryza sativa subsp. japonica (Rice).